The following is a 243-amino-acid chain: Chromosome partition protein MukE (243 aa).

Positions 223 to 243 are disordered; the sequence is LMENDTKSADEIDEEFDGEQE. The segment covering 233–243 has biased composition (acidic residues); the sequence is EIDEEFDGEQE.

The protein belongs to the MukE family. As to quaternary structure, interacts, and probably forms a ternary complex, with MukF and MukB. The complex formation is stimulated by calcium or magnesium.

It is found in the cytoplasm. The protein localises to the nucleoid. Its function is as follows. Involved in chromosome condensation, segregation and cell cycle progression. May participate in facilitating chromosome segregation by condensation DNA from both sides of a centrally located replisome during cell division. Probably acts via its interaction with MukB and MukF. The chain is Chromosome partition protein MukE from Haemophilus influenzae (strain ATCC 51907 / DSM 11121 / KW20 / Rd).